We begin with the raw amino-acid sequence, 496 residues long: Probable chlorophyll(ide) b reductase NYC1, chloroplastic (496 aa).

Residues 1–43 (MTTLTKIQVYPQVLEHRLFFRDPIRVGSRLTCRERSNRVYVHR) constitute a chloroplast transit peptide. The next 2 helical transmembrane spans lie at 105 to 125 (YIVT…LSGG) and 132 to 152 (LVWY…ANMV). 166-190 (ITGSTRGLGKALAREFLLSGDRVIV) lines the NAD(+) pocket. A coiled-coil region spans residues 195-224 (SESVDMTVKELEQNLKEIMSNASESARKKL). Y330 serves as the catalytic Proton acceptor. Residues 470-490 (WVSVFSLSVVCAFIILQSTTP) traverse the membrane as a helical segment.

Belongs to the short-chain dehydrogenases/reductases (SDR) family. In terms of assembly, interacts with NOL to form a complex that acts as a chlorophyll b reductase. Interacts with HCAR, RCCR, SGR1 and the LHCII complex. Part of a SGR1-CCE-LHCII complex, which acts in chlorophyll breakdown.

It is found in the plastid. The protein resides in the chloroplast thylakoid membrane. The enzyme catalyses 7(1)-hydroxychlorophyllide a + NAD(+) = chlorophyllide b + NADH + H(+). It carries out the reaction 7(1)-hydroxychlorophyllide a + NADP(+) = chlorophyllide b + NADPH + H(+). Its function is as follows. Involved in chlorophyll b degradation. Belongs to the chlorophyll catabolic enzymes (CCEs). The polypeptide is Probable chlorophyll(ide) b reductase NYC1, chloroplastic (NYC1) (Arabidopsis thaliana (Mouse-ear cress)).